The primary structure comprises 889 residues: Coatomer subunit beta' (889 aa).

WD repeat units lie at residues 11-41 (NRSDRVKGIDFHPTEPWVLTTLYSGRVELWN), 53-83 (VTETPVRAGKFIARKNWIIVGSDDFRIRVFN), 95-125 (AHPDYIRSIAVHPTKPYVLSGSDDLTVKLWN), 138-169 (GHEHFVMCVAFNPKDPSTFASGCLDRTVKVWS), 182-214 (GQERGVNYVDYYPLPDKPYMITASDDLTIKIWD), and 226-256 (GHMSNVSFAVFHPTLPIIISGSEDGTLKIWN). S326 is modified (phosphoserine). The segment at 806–889 (CGAEGLPGSS…AVPEPVEEES (84 aa)) is disordered. Residues 836-864 (DENKEAEVEDSEFKESNSEAVEAEKKEEE) are compositionally biased toward basic and acidic residues. Low complexity predominate over residues 866–879 (PQQQQSEQQPEQGE).

The protein belongs to the WD repeat COPB2 family. As to quaternary structure, oligomeric complex that consists of at least the alpha, beta, beta', gamma, delta, epsilon and zeta subunits. Interacts with the ESCRT-0 subunit VPS27.

The protein localises to the cytoplasm. It is found in the golgi apparatus membrane. Its subcellular location is the cytoplasmic vesicle. The protein resides in the COPI-coated vesicle membrane. Its function is as follows. The coatomer is a cytosolic protein complex that binds to dilysine motifs and reversibly associates with Golgi non-clathrin-coated vesicles, which further mediate biosynthetic protein transport from the ER, via the Golgi up to the trans Golgi network. Coatomer complex is required for budding from Golgi membranes, and is essential for the retrograde Golgi-to-ER transport of dilysine-tagged proteins. This chain is Coatomer subunit beta' (SEC27), found in Saccharomyces cerevisiae (strain ATCC 204508 / S288c) (Baker's yeast).